A 609-amino-acid polypeptide reads, in one-letter code: Granule-bound starch synthase 1, chloroplastic/amyloplastic (609 aa).

A chloroplast-targeting transit peptide spans 1-77 (MSALTTSQLA…SRRFPSVVVY (77 aa)). A disordered region spans residues 29–67 (RHGFQGLKPRSPAGGDATSLSVTTSARATPKQQRSVQRG). Polar residues predominate over residues 46–66 (TSLSVTTSARATPKQQRSVQR). Lys97 lines the ADP-alpha-D-glucose pocket.

This sequence belongs to the glycosyltransferase 1 family. Bacterial/plant glycogen synthase subfamily.

It localises to the plastid. It is found in the chloroplast. The protein resides in the amyloplast. It carries out the reaction an NDP-alpha-D-glucose + [(1-&gt;4)-alpha-D-glucosyl](n) = [(1-&gt;4)-alpha-D-glucosyl](n+1) + a ribonucleoside 5'-diphosphate + H(+). Its pathway is glycan biosynthesis; starch biosynthesis. Required for the synthesis of amylose in endosperm. In Oryza glaberrima (African rice), this protein is Granule-bound starch synthase 1, chloroplastic/amyloplastic (WAXY).